A 323-amino-acid polypeptide reads, in one-letter code: Transcription initiation factor IIB 7 (323 aa).

The span at 1–16 (MTRSTRQRERETAAKQ) shows a compositional bias: basic and acidic residues. The disordered stretch occupies residues 1 to 35 (MTRSTRQRERETAAKQEEEEDSEEGVRECPECGSD). Residues 24-56 (EGVRECPECGSDNLVKSSDRAELVCNDCGLVVE) form a TFIIB-type zinc finger. Residues C29, C32, C48, and C51 each contribute to the Zn(2+) site. 2 consecutive repeat copies span residues 142 to 225 (SEID…SQEL) and 236 to 317 (KYVP…EQIE).

Belongs to the TFIIB family.

In terms of biological role, stabilizes TBP binding to an archaeal box-A promoter. Also responsible for recruiting RNA polymerase II to the pre-initiation complex (DNA-TBP-TFIIB). The polypeptide is Transcription initiation factor IIB 7 (Halobacterium salinarum (strain ATCC 700922 / JCM 11081 / NRC-1) (Halobacterium halobium)).